A 75-amino-acid polypeptide reads, in one-letter code: Acyl carrier protein (75 aa).

The 75-residue stretch at 1-75 (MIFEKVRDII…DVVEYLSNLE (75 aa)) folds into the Carrier domain. Serine 35 is modified (O-(pantetheine 4'-phosphoryl)serine).

This sequence belongs to the acyl carrier protein (ACP) family. 4'-phosphopantetheine is transferred from CoA to a specific serine of apo-ACP by AcpS. This modification is essential for activity because fatty acids are bound in thioester linkage to the sulfhydryl of the prosthetic group.

It is found in the cytoplasm. Its pathway is lipid metabolism; fatty acid biosynthesis. In terms of biological role, carrier of the growing fatty acid chain in fatty acid biosynthesis. The polypeptide is Acyl carrier protein (Thermoanaerobacter pseudethanolicus (strain ATCC 33223 / 39E) (Clostridium thermohydrosulfuricum)).